The chain runs to 840 residues: Probable inorganic carbon transporter subunit DabA 2 (840 aa).

4 residues coordinate Zn(2+): Cys356, Asp358, His540, and Cys555.

The protein belongs to the inorganic carbon transporter (TC 9.A.2) DabA family. Forms a complex with DabB. Requires Zn(2+) as cofactor.

It is found in the cell inner membrane. Its function is as follows. Part of an energy-coupled inorganic carbon pump. The chain is Probable inorganic carbon transporter subunit DabA 2 from Bradyrhizobium sp. (strain ORS 278).